Reading from the N-terminus, the 188-residue chain is Putative manganese efflux pump MntP (188 aa).

The next 6 membrane-spanning stretches (helical) occupy residues 3–23 (LFSL…VSIC), 39–59 (AGLY…LLGV), 65–85 (ITDY…VNML), 110–130 (LGFA…FLSV), 131–151 (DIYS…IIGV), and 167–187 (ILGG…HTLF).

It belongs to the MntP (TC 9.B.29) family.

The protein localises to the cell inner membrane. In terms of biological role, probably functions as a manganese efflux pump. The sequence is that of Putative manganese efflux pump MntP from Mannheimia succiniciproducens (strain KCTC 0769BP / MBEL55E).